The sequence spans 181 residues: ATP-dependent protease subunit HslV (181 aa).

Residue threonine 5 is part of the active site. Na(+)-binding residues include serine 162, cysteine 165, and threonine 168.

The protein belongs to the peptidase T1B family. HslV subfamily. A double ring-shaped homohexamer of HslV is capped on each side by a ring-shaped HslU homohexamer. The assembly of the HslU/HslV complex is dependent on binding of ATP.

It is found in the cytoplasm. The enzyme catalyses ATP-dependent cleavage of peptide bonds with broad specificity.. With respect to regulation, allosterically activated by HslU binding. Functionally, protease subunit of a proteasome-like degradation complex believed to be a general protein degrading machinery. In Campylobacter hominis (strain ATCC BAA-381 / DSM 21671 / CCUG 45161 / LMG 19568 / NCTC 13146 / CH001A), this protein is ATP-dependent protease subunit HslV.